The sequence spans 295 residues: Ethanolamine ammonia-lyase small subunit (295 aa).

Adenosylcob(III)alamin-binding residues include valine 207, glutamate 228, and cysteine 258.

It belongs to the EutC family. As to quaternary structure, the basic unit is a heterodimer which dimerizes to form tetramers. The heterotetramers trimerize; 6 large subunits form a core ring with 6 small subunits projecting outwards. Requires adenosylcob(III)alamin as cofactor.

It is found in the bacterial microcompartment. The enzyme catalyses ethanolamine = acetaldehyde + NH4(+). The protein operates within amine and polyamine degradation; ethanolamine degradation. Functionally, catalyzes the deamination of various vicinal amino-alcohols to oxo compounds. Allows this organism to utilize ethanolamine as the sole source of nitrogen and carbon in the presence of external vitamin B12. This Shigella sonnei (strain Ss046) protein is Ethanolamine ammonia-lyase small subunit.